The sequence spans 392 residues: Homeobox protein engrailed-1 (392 aa).

Disordered regions lie at residues 1–100, 132–164, 219–251, and 282–306; these read MEEQ…AQLH, ARGG…TRAP, KPSD…PAIL, and SDRP…DKRP. Low complexity predominate over residues 14–36; the sequence is SALGAAAAATPGGLSLSLSPGAS. 2 stretches are compositionally biased toward pro residues: residues 51 to 66 and 75 to 84; these read SPQP…PCLP and PPHPPPPPPQ. Low complexity predominate over residues 85–100; sequence HLAAPAHQPQPAAQLH. Gly residues predominate over residues 223–236; it reads TGGGGSGGGAGSPG. Positions 303 to 362 form a DNA-binding region, homeobox; it reads DKRPRTAFTAEQLQRLKAEFQANRYITEQRRQTLAQELSLNESQIKIWFQNKRAKIKKAT.

Belongs to the engrailed homeobox family.

Its subcellular location is the nucleus. Its function is as follows. Required for proper formation of the apical ectodermal ridge and correct dorsal-ventral patterning in the limb. The protein is Homeobox protein engrailed-1 (EN1) of Homo sapiens (Human).